A 58-amino-acid polypeptide reads, in one-letter code: Small ribosomal subunit protein bS21 (58 aa).

This sequence belongs to the bacterial ribosomal protein bS21 family.

The protein is Small ribosomal subunit protein bS21 of Picosynechococcus sp. (strain ATCC 27264 / PCC 7002 / PR-6) (Agmenellum quadruplicatum).